The sequence spans 120 residues: Large ribosomal subunit protein uL18 (120 aa).

Belongs to the universal ribosomal protein uL18 family. Part of the 50S ribosomal subunit; part of the 5S rRNA/L5/L18/L25 subcomplex. Contacts the 5S and 23S rRNAs.

This is one of the proteins that bind and probably mediate the attachment of the 5S RNA into the large ribosomal subunit, where it forms part of the central protuberance. The polypeptide is Large ribosomal subunit protein uL18 (Methylobacterium nodulans (strain LMG 21967 / CNCM I-2342 / ORS 2060)).